The following is a 1147-amino-acid chain: Nucleolar protein 8 (1147 aa).

An RRM domain is found at 8 to 89; the sequence is KRLFVGGLGQ…GTLQIQLAKE (82 aa). Lys225 participates in a covalent cross-link: Glycyl lysine isopeptide (Lys-Gly) (interchain with G-Cter in SUMO2). Ser300 and Ser306 each carry phosphoserine. Lys316 is covalently cross-linked (Glycyl lysine isopeptide (Lys-Gly) (interchain with G-Cter in SUMO2)). The residue at position 362 (Tyr362) is a Phosphotyrosine. A phosphoserine mark is found at Ser364 and Ser365. At Thr367 the chain carries Phosphothreonine. The segment at 379–401 is disordered; sequence KVKNSAESSQPERTVSKKSSFQK. Positions 383–400 are enriched in polar residues; sequence SAESSQPERTVSKKSSFQ. Ser416 bears the Phosphoserine mark. Disordered stretches follow at residues 427-452, 472-511, 592-659, 686-741, 766-888, 932-963, and 986-1017; these read KFVN…EEYK, AGSH…DLYN, MENG…PLKA, KALE…EDNQ, ANLD…NEDE, KHDH…AEKL, and SNTD…TLAC. A compositionally biased stretch (acidic residues) spans 441-450; that stretch reads DSEESEEDEE. Composition is skewed to polar residues over residues 592–610 and 629–650; these read MENG…TSCQ and TFEN…STNP. Composition is skewed to basic and acidic residues over residues 700-714 and 732-741; these read SLEK…EDPQ and AKDKQAEDNQ. Ser704 carries the post-translational modification Phosphoserine. Residue Thr777 is modified to Phosphothreonine. Ser783 and Ser787 each carry phosphoserine. Over residues 799-809 the composition is skewed to basic and acidic residues; it reads CPEKELMKESV. Residues Ser819, Ser820, Ser825, Ser827, and Ser872 each carry the phosphoserine modification. Positions 857–883 are enriched in basic and acidic residues; sequence SDERFRMDSRFLESDSEDEKKELNEDK. 2 coiled-coil regions span residues 868–898 and 937–963; these read LESD…KTLN and IYER…AEKL. Over residues 994–1011 the composition is skewed to basic and acidic residues; sequence DVPRTEAGAREGTGKIRN. Lys1038 participates in a covalent cross-link: Glycyl lysine isopeptide (Lys-Gly) (interchain with G-Cter in SUMO2). The disordered stretch occupies residues 1055–1086; the sequence is PNDPRFQDSSSEEEDIAEEADHSKPSPGEAVP. Residues Ser1063, Ser1064, Ser1065, and Ser1080 each carry the phosphoserine modification.

Interacts with the GTP form of RRAGA, RRAGC and RRAGD. Interacts with NIP7. Interacts with DDX18; the interaction is RNA-dependent. Interacts with DDX47; the interaction is RNA-dependent. Phosphorylated.

It is found in the nucleus. It localises to the nucleolus. Functionally, plays an essential role in the survival of diffuse-type gastric cancer cells. Acts as a nucleolar anchoring protein for DDX47. May be involved in regulation of gene expression at the post-transcriptional level or in ribosome biogenesis in cancer cells. The sequence is that of Nucleolar protein 8 from Mus musculus (Mouse).